We begin with the raw amino-acid sequence, 214 residues long: MAKQRPSSKRWLREHHNDPYVQQARREGYRSRAAYKLMELQEVVKEDGKSLLLIPVGANVVELGAAPGGWTQVAVKLAGVEGSVVGIDLLAMDPVPGAEILVGDFLDDAMLAQLQGLLHEGRVDVVLSDMAPNMCGVKSADQLRGEALAEAAFQFVEENLKTGGNFAVKLFNGPGFHDMVKQARAMFTVVKVVKPDSSRSRSPEHYLVGMGFKG.

Residues G68, W70, D88, D104, and D129 each contribute to the S-adenosyl-L-methionine site. K169 serves as the catalytic Proton acceptor.

It belongs to the class I-like SAM-binding methyltransferase superfamily. RNA methyltransferase RlmE family.

The protein resides in the cytoplasm. It carries out the reaction uridine(2552) in 23S rRNA + S-adenosyl-L-methionine = 2'-O-methyluridine(2552) in 23S rRNA + S-adenosyl-L-homocysteine + H(+). In terms of biological role, specifically methylates the uridine in position 2552 of 23S rRNA at the 2'-O position of the ribose in the fully assembled 50S ribosomal subunit. The sequence is that of Ribosomal RNA large subunit methyltransferase E from Magnetococcus marinus (strain ATCC BAA-1437 / JCM 17883 / MC-1).